The chain runs to 185 residues: Ribosome-recycling factor (185 aa).

The protein belongs to the RRF family.

The protein resides in the cytoplasm. Its function is as follows. Responsible for the release of ribosomes from messenger RNA at the termination of protein biosynthesis. May increase the efficiency of translation by recycling ribosomes from one round of translation to another. This is Ribosome-recycling factor from Xylella fastidiosa (strain Temecula1 / ATCC 700964).